Here is a 362-residue protein sequence, read N- to C-terminus: 3-dehydroquinate synthase (362 aa).

Residues 72–77 (SGEEAK), 106–110 (GVTGD), 130–131 (TT), Lys-142, and Lys-151 contribute to the NAD(+) site. Glu-184, His-246, and His-263 together coordinate Zn(2+).

The protein belongs to the sugar phosphate cyclases superfamily. Dehydroquinate synthase family. Co(2+) serves as cofactor. The cofactor is Zn(2+). It depends on NAD(+) as a cofactor.

Its subcellular location is the cytoplasm. It catalyses the reaction 7-phospho-2-dehydro-3-deoxy-D-arabino-heptonate = 3-dehydroquinate + phosphate. Its pathway is metabolic intermediate biosynthesis; chorismate biosynthesis; chorismate from D-erythrose 4-phosphate and phosphoenolpyruvate: step 2/7. In terms of biological role, catalyzes the conversion of 3-deoxy-D-arabino-heptulosonate 7-phosphate (DAHP) to dehydroquinate (DHQ). The protein is 3-dehydroquinate synthase of Bacillus velezensis (strain DSM 23117 / BGSC 10A6 / LMG 26770 / FZB42) (Bacillus amyloliquefaciens subsp. plantarum).